The chain runs to 651 residues: LysM domain receptor-like kinase 3 (651 aa).

An N-terminal signal peptide occupies residues 1–19 (MNLTFYIFFLSLLPSFSSS). 8 N-linked (GlcNAc...) asparagine glycosylation sites follow: N2, N23, N42, N73, N86, N100, N114, and N177. Residues 20–236 (KPMNCSDTTR…TAKSGSHVPY (217 aa)) are Extracellular-facing. Cystine bridges form between C24–C76, C31–C133, and C74–C131. In terms of domain architecture, LysM spans 142–186 (MSYVAMAGDSVQSLSSRFGVSMDRIEDVNGILNLDNITAGDLLYI). The segment at 196–216 (YETSKINPPAPSPAPASSLAN) is disordered. 2 N-linked (GlcNAc...) asparagine glycosylation sites follow: N218 and N225. A helical transmembrane segment spans residues 237–257 (IWIVGGLGVVLALLVLCILVC). The Cytoplasmic portion of the chain corresponds to 258 to 651 (ICLRSSSCSS…QVFSGLVQGR (394 aa)). T330 is modified (phosphothreonine). The 288-residue stretch at 341 to 628 (FSDSNLLGHG…VVISLSQILL (288 aa)) folds into the Protein kinase domain. ATP is bound by residues 347–355 (LGHGNYGSV) and K368. Residue Y410 is modified to Phosphotyrosine. D464 serves as the catalytic Proton acceptor. S468 is modified (phosphoserine). Phosphothreonine is present on residues T500 and T505. Residue Y513 is modified to Phosphotyrosine.

It belongs to the protein kinase superfamily. Ser/Thr protein kinase family.

Its subcellular location is the cell membrane. Putative Lysin motif (LysM) receptor kinase that may recognize microbe-derived N-acetylglucosamine (NAG)-containing ligands. The sequence is that of LysM domain receptor-like kinase 3 (LYK3) from Arabidopsis thaliana (Mouse-ear cress).